A 346-amino-acid polypeptide reads, in one-letter code: Histone PARylation factor 1 (346 aa).

Met1 is modified (N-acetylmethionine). Positions 1 to 10 (MVGGGAKRRL) are enriched in basic residues. Positions 1–29 (MVGGGAKRRLRGEGPQCEKPVDMKKSKSC) are disordered. Lys19 carries the post-translational modification N6-acetyllysine. Over residues 19–29 (KPVDMKKSKSC) the composition is skewed to basic and acidic residues. Position 97 is an ADP-ribosylserine (Ser97). N6-acetyllysine occurs at positions 186 and 233. Asp235 is subject to PolyADP-ribosyl aspartic acid. Tyr238 carries the post-translational modification ADP-ribosyltyrosine. At Glu240 the chain carries PolyADP-ribosyl glutamic acid. The interaction with PARP1 stretch occupies residues 242–346 (PETDASLRRI…SQDDVDQLAA (105 aa)). Glu284 (proton donor) is an active-site residue.

Belongs to the HPF1 family. As to quaternary structure, interacts with PARP1 (via the PARP catalytic domain). Interacts with PARP2 (via the PARP catalytic domain). Interacts with core nucleosomes in a PARP1- and PARP2-dependent manner.

It localises to the chromosome. The protein localises to the nucleus. Functionally, cofactor for serine ADP-ribosylation that confers serine specificity on PARP1 and PARP2 and plays a key role in DNA damage response. Initiates the repair of double-strand DNA breaks: recruited to DNA damage sites by PARP1 and PARP2 and switches the amino acid specificity of PARP1 and PARP2 from aspartate or glutamate to serine residues, licensing serine ADP-ribosylation of target proteins. Serine ADP-ribosylation of target proteins, such as histones, promotes decompaction of chromatin and the recruitment of repair factors leading to the reparation of DNA strand breaks. Serine ADP-ribosylation of proteins constitutes the primary form of ADP-ribosylation of proteins in response to DNA damage. HPF1 acts by completing the active site of PARP1 and PARP2: forms a composite active site composed of residues from HPF1 and PARP1 or PARP2. While HPF1 promotes the initiation of serine ADP-ribosylation, it restricts the polymerase activity of PARP1 and PARP2 in order to limit the length of poly-ADP-ribose chains. HPF1 also promotes tyrosine ADP-ribosylation, probably by conferring tyrosine specificity on PARP1. The sequence is that of Histone PARylation factor 1 from Bos taurus (Bovine).